Here is a 399-residue protein sequence, read N- to C-terminus: Serpin-Z4 (399 aa).

The segment at 36–56 (GNVAFSPLSLHVALSLITAGA) is signal for targeting protein Z4 into the ER lumen. The segment at 343 to 367 (GTEAGAATVAMGVAMSMPLKVDLVD) is RCL.

Belongs to the serpin family. As to expression, highly expressed in embryo and endosperm. Is accumulated and stored in the endosperm, where it exists in a free and a bound form. Expressed in roots, coleoptiles, shoots and leaves.

Its function is as follows. A major component of the endosperm albumin, this protein acts as a storage protein during grain filling, contributing a substantial part of the grain's lysine. May have an inhibitory function during filling or germination. Inhibits cathepsin G in vitro. This chain is Serpin-Z4 (PAZ1), found in Hordeum vulgare (Barley).